The following is a 336-amino-acid chain: Ketol-acid reductoisomerase (NADP(+)) (336 aa).

A KARI N-terminal Rossmann domain is found at 3–183; it reads ATMYYDRDVS…GGTRAGVLET (181 aa). NADP(+) is bound by residues 26–29, Arg49, Ser52, Ser54, and 84–87; these read YGSQ and DETQ. The active site involves His109. Gly135 is a binding site for NADP(+). Residues 184-329 form the KARI C-terminal knotted domain; sequence TFKEETETDL…RELRSKMPFI (146 aa). Asp192, Glu196, Glu228, and Glu232 together coordinate Mg(2+). Ser253 contacts substrate.

Belongs to the ketol-acid reductoisomerase family. Requires Mg(2+) as cofactor.

The catalysed reaction is (2R)-2,3-dihydroxy-3-methylbutanoate + NADP(+) = (2S)-2-acetolactate + NADPH + H(+). It carries out the reaction (2R,3R)-2,3-dihydroxy-3-methylpentanoate + NADP(+) = (S)-2-ethyl-2-hydroxy-3-oxobutanoate + NADPH + H(+). It functions in the pathway amino-acid biosynthesis; L-isoleucine biosynthesis; L-isoleucine from 2-oxobutanoate: step 2/4. Its pathway is amino-acid biosynthesis; L-valine biosynthesis; L-valine from pyruvate: step 2/4. Involved in the biosynthesis of branched-chain amino acids (BCAA). Catalyzes an alkyl-migration followed by a ketol-acid reduction of (S)-2-acetolactate (S2AL) to yield (R)-2,3-dihydroxy-isovalerate. In the isomerase reaction, S2AL is rearranged via a Mg-dependent methyl migration to produce 3-hydroxy-3-methyl-2-ketobutyrate (HMKB). In the reductase reaction, this 2-ketoacid undergoes a metal-dependent reduction by NADPH to yield (R)-2,3-dihydroxy-isovalerate. The chain is Ketol-acid reductoisomerase (NADP(+)) from Deinococcus geothermalis (strain DSM 11300 / CIP 105573 / AG-3a).